A 182-amino-acid chain; its full sequence is Crossover junction endodeoxyribonuclease RuvC (182 aa).

Residues Asp7, Glu67, and Asp139 contribute to the active site. Mg(2+) is bound by residues Asp7, Glu67, and Asp139.

This sequence belongs to the RuvC family. Homodimer which binds Holliday junction (HJ) DNA. The HJ becomes 2-fold symmetrical on binding to RuvC with unstacked arms; it has a different conformation from HJ DNA in complex with RuvA. In the full resolvosome a probable DNA-RuvA(4)-RuvB(12)-RuvC(2) complex forms which resolves the HJ. It depends on Mg(2+) as a cofactor.

It is found in the cytoplasm. The enzyme catalyses Endonucleolytic cleavage at a junction such as a reciprocal single-stranded crossover between two homologous DNA duplexes (Holliday junction).. Its function is as follows. The RuvA-RuvB-RuvC complex processes Holliday junction (HJ) DNA during genetic recombination and DNA repair. Endonuclease that resolves HJ intermediates. Cleaves cruciform DNA by making single-stranded nicks across the HJ at symmetrical positions within the homologous arms, yielding a 5'-phosphate and a 3'-hydroxyl group; requires a central core of homology in the junction. The consensus cleavage sequence is 5'-(A/T)TT(C/G)-3'. Cleavage occurs on the 3'-side of the TT dinucleotide at the point of strand exchange. HJ branch migration catalyzed by RuvA-RuvB allows RuvC to scan DNA until it finds its consensus sequence, where it cleaves and resolves the cruciform DNA. This Bordetella pertussis (strain Tohama I / ATCC BAA-589 / NCTC 13251) protein is Crossover junction endodeoxyribonuclease RuvC.